The primary structure comprises 237 residues: Regulator of G-protein signaling 9-binding protein (237 aa).

Topologically, residues 1–212 (MAREECKALL…ERAGPCDPSK (212 aa)) are cytoplasmic. A coiled-coil region spans residues 30 to 54 (SADTQDLREELQKTRQKARELAVAT). An SNARE-like region spans residues 153 to 202 (EVLQVGEMIDDMEMKVNVPRWTVQARQAAGAELLSGASAGASSAGGISVE). A helical; Anchor for type IV membrane protein membrane pass occupies residues 213–233 (ALAATVFSAVLLVAVALALCV). Topologically, residues 234-237 (AKLS) are extracellular.

The protein belongs to the RGS7BP/RGS9BP family. In terms of assembly, specifically interacts with isoform RGS9-1 of RGS9. Interaction is decreased when RGS9-1 is phosphorylated at 'Ser-475'. Component of the RGS9-1-Gbeta5 complex composed of RGS9-1, Gbeta5 (GNB5) and RGS9BP. In terms of tissue distribution, predominantly expressed in photoreceptors of the retina. Weakly expressed in other areas of the central nervous system.

It is found in the membrane. Functionally, regulator of G protein-coupled receptor (GPCR) signaling in phototransduction. Participates in the recovery phase of visual transduction via its interaction with RGS9-1 isoform. Acts as a membrane-anchor that mediates the targeting of RGS9-1 to the photoreceptor outer segment, where phototransduction takes place. Enhances the ability of RGS9-1 to stimulate G protein GTPase activity, allowing the visual signal to be terminated on the physiologically time scale. It also controls the proteolytic stability of RGS9-1, probably by protecting it from degradation. This is Regulator of G-protein signaling 9-binding protein (Rgs9bp) from Mus musculus (Mouse).